The sequence spans 481 residues: Cysteine--tRNA ligase (481 aa).

C29 is a Zn(2+) binding site. Positions P31–H41 match the 'HIGH' region motif. 3 residues coordinate Zn(2+): C210, H235, and E239. Positions K272–S276 match the 'KMSKS' region motif. K275 is a binding site for ATP.

This sequence belongs to the class-I aminoacyl-tRNA synthetase family. As to quaternary structure, monomer. The cofactor is Zn(2+).

It is found in the cytoplasm. The catalysed reaction is tRNA(Cys) + L-cysteine + ATP = L-cysteinyl-tRNA(Cys) + AMP + diphosphate. This is Cysteine--tRNA ligase from Anaeromyxobacter dehalogenans (strain 2CP-1 / ATCC BAA-258).